The following is a 158-amino-acid chain: Transcription elongation factor GreA (158 aa).

This sequence belongs to the GreA/GreB family.

Necessary for efficient RNA polymerase transcription elongation past template-encoded arresting sites. The arresting sites in DNA have the property of trapping a certain fraction of elongating RNA polymerases that pass through, resulting in locked ternary complexes. Cleavage of the nascent transcript by cleavage factors such as GreA or GreB allows the resumption of elongation from the new 3'terminus. GreA releases sequences of 2 to 3 nucleotides. In Psychrobacter cryohalolentis (strain ATCC BAA-1226 / DSM 17306 / VKM B-2378 / K5), this protein is Transcription elongation factor GreA.